Consider the following 593-residue polypeptide: Dolichyl-phosphooligosaccharide-protein glycotransferase 2 (593 aa).

Topologically, residues 1-12 (MTPVGMDRKSLS) are cytoplasmic. A helical transmembrane segment spans residues 13–33 (LLILIVLLGLCIRLQNFGEIF). The Extracellular portion of the chain corresponds to 34–98 (DSRIYYYGYD…GLFLGFWASE (65 aa)). The short motif at 41 to 43 (GYD) is the DXD motif 1 element. D43 is a Mn(2+) binding site. Residues 99 to 119 (IFAVVFPVIIGVLCIVLVYLI) traverse the membrane as a helical segment. Residues 120 to 128 (SLEVLRNEK) are Cytoplasmic-facing. Residues 129-149 (FALISAFIFSVCPVTVWKSLL) traverse the membrane as a helical segment. Residues 150-154 (GKADH) are Extracellular-facing. Mn(2+) is bound at residue D153. Residues 153 to 155 (DHH) carry the DXD motif 2 motif. Residue H154 coordinates a glycophospholipid. H155 lines the Mn(2+) pocket. The helical transmembrane segment at 155–175 (HIWVVFLLLLSIWLVTKPGLL) threads the bilayer. Topologically, residues 176-180 (KLLSG) are cytoplasmic. Residues 181 to 201 (IPMLLMALSWLGAPIYAALLA) form a helical membrane-spanning segment. Topologically, residues 202–229 (VSSLFQFNEKEVRIVGISNLIPVLSSIQ) are extracellular. A helical transmembrane segment spans residues 230–250 (NLFLGFSFLAIAVFLLVGSFV). The Cytoplasmic portion of the chain corresponds to 251 to 265 (KRFERRFRYAIVYYL). The chain crosses the membrane as a helical span at residues 266–286 (CICSVALLSAYLMPVGWLGFV). Residues 287 to 310 (KSGISYVLGTDIYLPTIREARSFQ) lie on the Extracellular side of the membrane. A TIXE motif motif is present at residues 302–305 (TIRE). Residues 311-331 (ILGVISSAGYLFFVLAIPALF) form a helical membrane-spanning segment. Position 332 (M332) is a topological domain, cytoplasmic. Residues 333-353 (LRNGFLKVFFVLSFLISILQL) form a helical membrane-spanning segment. Residue R354 is a topological domain, extracellular. Residue R354 coordinates a glycophospholipid. A helical membrane pass occupies residues 355 to 375 (FVEVLAFPVAILASYTICQIL). The Cytoplasmic portion of the chain corresponds to 376–411 (ERVDYPVFRKEEEGESKRRGRKEKKKAVEIRKKDHA). The helical transmembrane segment at 412–432 (TVIAFLLFLALPCFANSLAPV) threads the bilayer. Topologically, residues 433–593 (EMTMDWKEAL…FGTVKIFEVK (161 aa)) are extracellular. The tract at residues 468–470 (WWD) is interacts with target acceptor peptide in protein substrate. The WWDYG motif motif lies at 468–472 (WWDYG). The short motif at 524-539 (ELTVKPETNKTKFIPI) is the DKi motif element.

Belongs to the STT3 family. Mn(2+) is required as a cofactor. Mg(2+) serves as cofactor. Requires Zn(2+) as cofactor.

The protein localises to the cell membrane. The catalysed reaction is an archaeal dolichyl phosphooligosaccharide + [protein]-L-asparagine = an archaeal dolichyl phosphate + a glycoprotein with the oligosaccharide chain attached by N-beta-D-glycosyl linkage to a protein L-asparagine.. The protein operates within protein modification; protein glycosylation. Oligosaccharyl transferase (OST) that catalyzes the initial transfer of a defined glycan (a GalNAc-linked heptasaccharide composed of 4 Hex, 3 dHex and a sulfate for A.fulgidus AglB-S) from the lipid carrier dolichol-monophosphate to an asparagine residue within an Asn-X-Ser/Thr consensus motif in nascent polypeptide chains, the first step in protein N-glycosylation. The chain is Dolichyl-phosphooligosaccharide-protein glycotransferase 2 (aglB2) from Archaeoglobus fulgidus (strain ATCC 49558 / DSM 4304 / JCM 9628 / NBRC 100126 / VC-16).